An 842-amino-acid polypeptide reads, in one-letter code: Alanine--tRNA ligase (842 aa).

Residues histidine 549, histidine 553, cysteine 650, and histidine 654 each contribute to the Zn(2+) site.

Belongs to the class-II aminoacyl-tRNA synthetase family. Zn(2+) is required as a cofactor.

It localises to the cytoplasm. It catalyses the reaction tRNA(Ala) + L-alanine + ATP = L-alanyl-tRNA(Ala) + AMP + diphosphate. Its function is as follows. Catalyzes the attachment of alanine to tRNA(Ala) in a two-step reaction: alanine is first activated by ATP to form Ala-AMP and then transferred to the acceptor end of tRNA(Ala). Also edits incorrectly charged Ser-tRNA(Ala) and Gly-tRNA(Ala) via its editing domain. In Campylobacter jejuni subsp. jejuni serotype O:2 (strain ATCC 700819 / NCTC 11168), this protein is Alanine--tRNA ligase.